The primary structure comprises 365 residues: MPRISEIAASVGLLLLIGVISVDGLVKEGDYQNSLYQQNLESNSATGATASFPFLMPNVSPQTPDLYLCTPIKVDPTTTYYIVGFNPNATMNTAHHMLLYGCGEPGTSKTTWNCGEMNRASQEESASPCGPHSNSQIVYAWARDAQKLNLPEGVGFKVGKNSPIKYLVLQVHYAHIDKFKDGSTDDSGVFLDYTEEPRKKLAGTLLLGTDGQIPAMKTEHLETACEVNEQKVLHPFAYRVHTHGLGKVVSGYRVRTNSDGEQEWLQLGKRDPLTPQMFYNTSNTDPIIEGDKIAVRCTMQSTRHRTTKIGPTNEDEMCNFYLMYYVDHGETLNMKFCFSQGAPYYFWSNPDSGLHNIPHIEASTL.

Positions methionine 1–glycine 24 are cleaved as a signal peptide. 2 cysteine pairs are disulfide-bonded: cysteine 69–cysteine 114 and cysteine 102–cysteine 129. A glycan (N-linked (GlcNAc...) asparagine) is linked at asparagine 88. Residues histidine 95 and histidine 96 each coordinate Cu cation. 3 residues coordinate Cu cation: histidine 172, histidine 241, and histidine 243. A glycan (N-linked (GlcNAc...) asparagine) is linked at asparagine 280. A disulfide bridge connects residues cysteine 297 and cysteine 318. Methionine 317 is a Cu cation binding site.

This sequence belongs to the copper type II ascorbate-dependent monooxygenase family. It depends on Cu(2+) as a cofactor. In terms of tissue distribution, expressed in the central nervous system (CNS) in a small number of CNS neurons (approximately a few hundred). Expression is present both in cell bodies and within neuropil regions. It is strongly expressed in neuroendocrine neurons (at protein level).

The protein resides in the secreted. It catalyses the reaction a [peptide]-C-terminal glycine + 2 L-ascorbate + O2 = a [peptide]-C-terminal (2S)-2-hydroxyglycine + 2 monodehydro-L-ascorbate radical + H2O. In terms of biological role, monooxygenase that catalyzes an essential reaction in C-terminal alpha-amidation of peptides. Produces an unstable peptidyl(2-hydroxyglycine) intermediate. C-terminal amidation of peptides is required for normal developmental transitions and for biosynthesis of secretory peptides throughout the life. The sequence is that of Peptidylglycine alpha-hydroxylating monooxygenase (Phm) from Drosophila melanogaster (Fruit fly).